A 381-amino-acid polypeptide reads, in one-letter code: Chaperone protein DnaJ (381 aa).

The region spanning 5-73 is the J domain; sequence DYYEVLGVGK…EKKAAYDQYG (69 aa). The CR-type zinc-finger motif lies at 141 to 219; the sequence is GHEAQIRVPH…CHGQGKLKSQ (79 aa). Zn(2+) is bound by residues Cys-154, Cys-157, Cys-171, Cys-174, Cys-193, Cys-196, Cys-207, and Cys-210. CXXCXGXG motif repeat units follow at residues 154–161, 171–178, 193–200, and 207–214; these read CDHCHGNG, CPTCHGAG, CPKCHGSG, and CTKCHGQG. Positions 357–381 are disordered; it reads SVHEGGSRHSPQEQSWLDKVKSFFS.

The protein belongs to the DnaJ family. In terms of assembly, homodimer. Zn(2+) serves as cofactor.

It is found in the cytoplasm. In terms of biological role, participates actively in the response to hyperosmotic and heat shock by preventing the aggregation of stress-denatured proteins and by disaggregating proteins, also in an autonomous, DnaK-independent fashion. Unfolded proteins bind initially to DnaJ; upon interaction with the DnaJ-bound protein, DnaK hydrolyzes its bound ATP, resulting in the formation of a stable complex. GrpE releases ADP from DnaK; ATP binding to DnaK triggers the release of the substrate protein, thus completing the reaction cycle. Several rounds of ATP-dependent interactions between DnaJ, DnaK and GrpE are required for fully efficient folding. Also involved, together with DnaK and GrpE, in the DNA replication of plasmids through activation of initiation proteins. This is Chaperone protein DnaJ from Cupriavidus necator (strain ATCC 17699 / DSM 428 / KCTC 22496 / NCIMB 10442 / H16 / Stanier 337) (Ralstonia eutropha).